The sequence spans 420 residues: Glyceraldehyde-3-phosphate dehydrogenase GAPCP2, chloroplastic (420 aa).

A chloroplast-targeting transit peptide spans 1–66; it reads MALSSLLRSA…YNAKRVQPIK (66 aa). NAD(+) is bound by residues 94-95, Asp-116, and Arg-162; that span reads RI. D-glyceraldehyde 3-phosphate is bound by residues 233–235, Thr-264, 293–294, and Arg-316; these read SCT and TG. Cys-234 (nucleophile) is an active-site residue. Asn-398 serves as a coordination point for NAD(+).

It belongs to the glyceraldehyde-3-phosphate dehydrogenase family. Homotetramer. As to expression, expressed in shoot and root vasculature, leaf veins and vascular tissue of flowers and siliques.

Its subcellular location is the plastid. It localises to the chloroplast stroma. The enzyme catalyses D-glyceraldehyde 3-phosphate + phosphate + NAD(+) = (2R)-3-phospho-glyceroyl phosphate + NADH + H(+). Functionally, involved in plastidial glycolytic pathway and plays a specific role in glycolytic energy production in non-green plastids and chloroplasts. Essential for breakdown of starch to form sucrose for export to non-photosynthetic tissues, and to generate primary metabolites for anabolic pathways such as fatty acid and amino acid synthesis. Plays an important role in plant development by providing substrates for the phosphorylated pathway of serine biosynthesis in roots. Plays a crucial role in pollen development. Functionally redundant with GAPCP1. This chain is Glyceraldehyde-3-phosphate dehydrogenase GAPCP2, chloroplastic (GAPCP2), found in Arabidopsis thaliana (Mouse-ear cress).